The chain runs to 185 residues: Ribosome-recycling factor (185 aa).

Residues valine 128–glutamate 158 form a disordered region.

It belongs to the RRF family.

It localises to the cytoplasm. In terms of biological role, responsible for the release of ribosomes from messenger RNA at the termination of protein biosynthesis. May increase the efficiency of translation by recycling ribosomes from one round of translation to another. The polypeptide is Ribosome-recycling factor (Helicobacter pylori (strain J99 / ATCC 700824) (Campylobacter pylori J99)).